The sequence spans 221 residues: CASP-like protein 4C1 (221 aa).

The disordered stretch occupies residues 1–21 (MDSPESSDRGLNPMTPDHGGH). Topologically, residues 1–54 (MDSPESSDRGLNPMTPDHGGHNGKVVHYFGQGVEGGPASPRKLGHGHLHPKANT) are cytoplasmic. A helical membrane pass occupies residues 55–75 (ALLLLRLLTFAFSLASLVIMA). Over 76–101 (TNSATTTATAGRHRTVNWVDFDTYRY) the chain is Extracellular. A helical transmembrane segment spans residues 102-122 (VLAACAIVCLYSFAEIGLGLW). Topologically, residues 123 to 144 (YLLKGRMVMPESMAHWFDFGHD) are cytoplasmic. A helical transmembrane segment spans residues 145–165 (QGFAYLIFSACSGATAVAHNL). The Extracellular portion of the chain corresponds to 166–189 (RERHILIHGMYGCDEANSFCMKAE). A helical transmembrane segment spans residues 190–210 (ISIGLAFGAFLFIALSSLLSG). The Cytoplasmic portion of the chain corresponds to 211 to 221 (YRLVKWLILGP).

The protein belongs to the Casparian strip membrane proteins (CASP) family. Homodimer and heterodimers.

It is found in the cell membrane. This chain is CASP-like protein 4C1, found in Pteridium aquilinum subsp. aquilinum (Bracken fern).